The sequence spans 177 residues: MARTNTRKAILAGGCFWGIQNLFRRQPGVISTRVGYTGGGTPNATYRNHGMHAEAVEIIYDPAITDYRTLLEFFFQIHDPTTRNRQGNDQGTSYRSAIFYLDDEQKKVALDTIAAVEASSLWPGKVVTEVSLAEDFWEAEPEHQDYLQHYPNGYTCHFVRPNWKLPRRAPADAKADS.

Cysteine 15 is a catalytic residue.

Belongs to the MsrA Met sulfoxide reductase family.

It carries out the reaction L-methionyl-[protein] + [thioredoxin]-disulfide + H2O = L-methionyl-(S)-S-oxide-[protein] + [thioredoxin]-dithiol. The catalysed reaction is [thioredoxin]-disulfide + L-methionine + H2O = L-methionine (S)-S-oxide + [thioredoxin]-dithiol. Functionally, has an important function as a repair enzyme for proteins that have been inactivated by oxidation. Catalyzes the reversible oxidation-reduction of methionine sulfoxide in proteins to methionine. In Mycobacterium leprae (strain Br4923), this protein is Peptide methionine sulfoxide reductase MsrA.